The primary structure comprises 209 residues: A-type ATP synthase subunit D (209 aa).

It belongs to the V-ATPase D subunit family. Has multiple subunits, A(3), B(3), C, D, E, F, G, I and K(x); there may be a few other subunits as well.

The protein localises to the cell membrane. Its function is as follows. Component of the A-type ATP synthase that produces ATP from ADP in the presence of a proton gradient across the membrane. The chain is A-type ATP synthase subunit D from Methanosarcina mazei (strain ATCC BAA-159 / DSM 3647 / Goe1 / Go1 / JCM 11833 / OCM 88) (Methanosarcina frisia).